A 304-amino-acid polypeptide reads, in one-letter code: Dermonecrotic toxin LiSicTox-betaIA1ii (304 aa).

A signal peptide spans 1–21 (MLLCAVISFIVYAVFLQEANG). The propeptide occupies 22–26 (HAAER). Residue His-38 is part of the active site. Mg(2+)-binding residues include Glu-58 and Asp-60. Residue His-74 is the Nucleophile of the active site. 2 disulfides stabilise this stretch: Cys-78–Cys-84 and Cys-80–Cys-223. Asp-118 contributes to the Mg(2+) binding site.

The protein belongs to the arthropod phospholipase D family. Class II subfamily. Mg(2+) serves as cofactor. As to expression, expressed by the venom gland.

The protein resides in the secreted. It catalyses the reaction an N-(acyl)-sphingosylphosphocholine = an N-(acyl)-sphingosyl-1,3-cyclic phosphate + choline. It carries out the reaction an N-(acyl)-sphingosylphosphoethanolamine = an N-(acyl)-sphingosyl-1,3-cyclic phosphate + ethanolamine. The catalysed reaction is a 1-acyl-sn-glycero-3-phosphocholine = a 1-acyl-sn-glycero-2,3-cyclic phosphate + choline. The enzyme catalyses a 1-acyl-sn-glycero-3-phosphoethanolamine = a 1-acyl-sn-glycero-2,3-cyclic phosphate + ethanolamine. Its function is as follows. Dermonecrotic toxins cleave the phosphodiester linkage between the phosphate and headgroup of certain phospholipids (sphingolipid and lysolipid substrates), forming an alcohol (often choline) and a cyclic phosphate. This toxin acts on sphingomyelin (SM) with low activity. It may also act on ceramide phosphoethanolamine (CPE), lysophosphatidylcholine (LPC) and lysophosphatidylethanolamine (LPE), but not on lysophosphatidylserine (LPS), and lysophosphatidylglycerol (LPG). It acts by transphosphatidylation, releasing exclusively cyclic phosphate products as second products. Induces dermonecrosis, hemolysis, increased vascular permeability, edema, inflammatory response, and platelet aggregation. This is Dermonecrotic toxin LiSicTox-betaIA1ii from Loxosceles intermedia (Brown spider).